The following is a 1019-amino-acid chain: Alpha-mannosidase At3g26720 (1019 aa).

The N-terminal stretch at 1–22 is a signal peptide; it reads MAVKCFSLYLILAAIVIGGVTS. The Zn(2+) site is built by His-47 and Asp-49. N-linked (GlcNAc...) asparagine glycosylation is present at Asn-64. Position 169 (Asp-169) interacts with Zn(2+). Asn-278 and Asn-336 each carry an N-linked (GlcNAc...) asparagine glycan. Residue His-410 participates in Zn(2+) binding. Cys-466 and Cys-474 are oxidised to a cystine. N-linked (GlcNAc...) asparagine glycosylation is found at Asn-470, Asn-638, Asn-730, and Asn-820. Cys-824 and Cys-829 are disulfide-bonded.

This sequence belongs to the glycosyl hydrolase 38 family. As to quaternary structure, homodimer. The cofactor is Zn(2+).

It catalyses the reaction Hydrolysis of terminal, non-reducing alpha-D-mannose residues in alpha-D-mannosides.. Functionally, liberates mannose from p-nitrophenyl-alpha-D-mannoside in vitro. The chain is Alpha-mannosidase At3g26720 from Arabidopsis thaliana (Mouse-ear cress).